The primary structure comprises 894 residues: DNA mismatch repair protein MutS (894 aa).

629–636 (GPNMGGKS) serves as a coordination point for ATP. The segment at 819–840 (TPTPQLDLFAPPPHPDTSDDDE) is disordered.

The protein belongs to the DNA mismatch repair MutS family.

This protein is involved in the repair of mismatches in DNA. It is possible that it carries out the mismatch recognition step. This protein has a weak ATPase activity. The polypeptide is DNA mismatch repair protein MutS (Cupriavidus pinatubonensis (strain JMP 134 / LMG 1197) (Cupriavidus necator (strain JMP 134))).